A 130-amino-acid chain; its full sequence is 29 kDa protein (130 aa).

The segment at 100-130 is disordered; the sequence is YDGPYRPATTRPKSLVSSEDVKGASKKKNSS.

In Beta vulgaris (Sugar beet), this protein is 29 kDa protein.